The chain runs to 313 residues: Metal ABC transporter substrate-binding lipoprotein (313 aa).

Positions 1-23 are cleaved as a signal peptide; that stretch reads MIEKYKNILITFIALAAIVFLVG. The N-palmitoyl cysteine moiety is linked to residue C24. Residue C24 is the site of S-diacylglycerol cysteine attachment. Zn(2+) contacts are provided by H71, H143, E209, and D284.

Belongs to the bacterial solute-binding protein 9 family. Lipoprotein receptor antigen (Lrai) subfamily.

Its subcellular location is the cell membrane. Part of an ATP-driven transport system for a metal; probably for manganese. This chain is Metal ABC transporter substrate-binding lipoprotein (mtsA), found in Lactococcus lactis subsp. lactis (strain IL1403) (Streptococcus lactis).